The primary structure comprises 75 residues: Small capsomere-interacting protein (75 aa).

Belongs to the herpesviridae small capsomere-interacting protein family. Interacts with the major capsid protein/MCP.

Its subcellular location is the virion. The protein localises to the host nucleus. In terms of biological role, participates in the assembly of the infectious particles by decorating the outer surface of the capsid shell and thus forming a layer between the capsid and the tegument. Complexes composed of the major capsid protein and small capsomere-interacting protein/SCP assemble together in the host cytoplasm and are translocated to the nucleus, where they accumulate and participate in capsid assembly. The chain is Small capsomere-interacting protein from Homo sapiens (Human).